We begin with the raw amino-acid sequence, 123 residues long: Nitrogen fixation nifHD1 region GlnB-like protein 2 (123 aa).

This sequence belongs to the P(II) protein family.

Its function is as follows. Could be involved in the regulation of nitrogen fixation. The sequence is that of Nitrogen fixation nifHD1 region GlnB-like protein 2 (glnBB) from Methanosarcina barkeri.